The sequence spans 567 residues: Potassium-transporting ATPase potassium-binding subunit (567 aa).

The next 12 helical transmembrane spans lie at 11-31 (LYLL…AALL), 67-87 (AAAI…LQRW), 136-156 (GLAV…VALV), 179-199 (LWLL…QGVV), 255-275 (FSNW…VVMF), 286-306 (VVLL…VYLA), 333-353 (FGVL…CGAV), 363-383 (LGGG…GGVG), 385-405 (GLYG…LMIG), 422-442 (LVSV…AIAV), 489-509 (LMLA…VLAL), and 532-552 (LFVV…YIPA).

It belongs to the KdpA family. As to quaternary structure, the system is composed of three essential subunits: KdpA, KdpB and KdpC.

It is found in the cell inner membrane. Its function is as follows. Part of the high-affinity ATP-driven potassium transport (or Kdp) system, which catalyzes the hydrolysis of ATP coupled with the electrogenic transport of potassium into the cytoplasm. This subunit binds the periplasmic potassium ions and delivers the ions to the membrane domain of KdpB through an intramembrane tunnel. The sequence is that of Potassium-transporting ATPase potassium-binding subunit from Laribacter hongkongensis (strain HLHK9).